A 101-amino-acid chain; its full sequence is Small ribosomal subunit protein uS14 (101 aa).

It belongs to the universal ribosomal protein uS14 family. Part of the 30S ribosomal subunit. Contacts proteins S3 and S10.

Binds 16S rRNA, required for the assembly of 30S particles and may also be responsible for determining the conformation of the 16S rRNA at the A site. The protein is Small ribosomal subunit protein uS14 of Maricaulis maris (strain MCS10) (Caulobacter maris).